Reading from the N-terminus, the 226-residue chain is Putative ABC transporter ATP-binding protein BH02760 (226 aa).

The ABC transporter domain occupies 4–222; sequence IKFDKVTQVF…IPLVAIKEYI (219 aa). 35–42 is an ATP binding site; sequence GANGSGKS.

This sequence belongs to the ABC transporter superfamily.

The protein resides in the cell inner membrane. Its function is as follows. Probably part of an ABC transporter complex. Responsible for energy coupling to the transport system. The chain is Putative ABC transporter ATP-binding protein BH02760 from Bartonella henselae (strain ATCC 49882 / DSM 28221 / CCUG 30454 / Houston 1) (Rochalimaea henselae).